Here is a 554-residue protein sequence, read N- to C-terminus: Glucose-6-phosphate isomerase (554 aa).

Glutamate 359 serves as the catalytic Proton donor. Catalysis depends on residues histidine 390 and lysine 518.

This sequence belongs to the GPI family.

The protein localises to the cytoplasm. The catalysed reaction is alpha-D-glucose 6-phosphate = beta-D-fructose 6-phosphate. It participates in carbohydrate biosynthesis; gluconeogenesis. It functions in the pathway carbohydrate degradation; glycolysis; D-glyceraldehyde 3-phosphate and glycerone phosphate from D-glucose: step 2/4. In terms of biological role, catalyzes the reversible isomerization of glucose-6-phosphate to fructose-6-phosphate. The polypeptide is Glucose-6-phosphate isomerase (Pseudomonas entomophila (strain L48)).